A 470-amino-acid polypeptide reads, in one-letter code: Putative multidrug resistance protein MdtD (470 aa).

The Periplasmic portion of the chain corresponds to 1 to 11 (MTELPDNTRWQ). A helical membrane pass occupies residues 12–32 (LWIVAFGFFMQSLDTTIVNTA). Over 33-48 (LPSMAKSLGESPLHMH) the chain is Cytoplasmic. A helical membrane pass occupies residues 49–69 (MVVVSYVLTVAVMLPASGWLA). Topologically, residues 70 to 76 (DKIGVRN) are periplasmic. Residues 77–97 (IFFAAIVLFTLGSLFCALSGT) traverse the membrane as a helical segment. The Cytoplasmic segment spans residues 98–101 (LNQL). Residues 102–124 (VLARVLQGVGGAMMVPVGRLTVM) form a helical membrane-spanning segment. Topologically, residues 125-137 (KIVPRAQYMAAMT) are periplasmic. Residues 138–158 (FVTLPGQIGPLLGPALGGVLV) form a helical membrane-spanning segment. The Cytoplasmic segment spans residues 159 to 164 (EYASWH). A helical transmembrane segment spans residues 165–185 (WIFLINIPVGIVGAMATFMLM). At 186–196 (PNYTIETRRFD) the chain is on the periplasmic side. A helical transmembrane segment spans residues 197–217 (LPGFLLLAIGMAVLTLALDGS). Residues 218-224 (KSMGISP) lie on the Cytoplasmic side of the membrane. Residues 225-245 (WTLAGLAAGGAAAILLYLFHA) traverse the membrane as a helical segment. Residues 246 to 262 (KKSSGALFSLRLFRTPT) are Periplasmic-facing. Residues 263–283 (FSLGLLGSFAGRIGSGMLPFM) form a helical membrane-spanning segment. Topologically, residues 284–285 (TP) are cytoplasmic. A helical membrane pass occupies residues 286–306 (VFLQIGLGFSPFHAGLMMIPM). Residues 307 to 341 (VLGSMGMKRIVVQIVNRFGYRRVLVATTLGLALVS) lie on the Periplasmic side of the membrane. Residues 342 to 362 (LLFMSVALLGWYYLLPLVLLL) form a helical membrane-spanning segment. The Cytoplasmic segment spans residues 363–395 (QGMVNSARFSSMNTLTLKDLPDTLASSGNSLLS). Residues 396–416 (MIMQLSMSIGVTIAGMLLGMF) traverse the membrane as a helical segment. Residues 417-430 (GQQHIGIDSSATHH) are Periplasmic-facing. The chain crosses the membrane as a helical span at residues 431-451 (VFMYTWLCMAVIIALPAIIFA). Topologically, residues 452-470 (RVPNDTQQNMVISRRKRSL) are cytoplasmic.

Belongs to the major facilitator superfamily. TCR/Tet family.

Its subcellular location is the cell inner membrane. The sequence is that of Putative multidrug resistance protein MdtD from Salmonella paratyphi A (strain ATCC 9150 / SARB42).